The sequence spans 160 residues: Phosphopantetheine adenylyltransferase (160 aa).

A substrate-binding site is contributed by S11. ATP is bound by residues 11-12 and H19; that span reads SF. Residues K43, L75, and R89 each contribute to the substrate site. Residues 90–92, E100, and 125–131 contribute to the ATP site; these read GLR and YSFISSS.

Belongs to the bacterial CoaD family. As to quaternary structure, homohexamer. Mg(2+) is required as a cofactor.

It is found in the cytoplasm. It catalyses the reaction (R)-4'-phosphopantetheine + ATP + H(+) = 3'-dephospho-CoA + diphosphate. The protein operates within cofactor biosynthesis; coenzyme A biosynthesis; CoA from (R)-pantothenate: step 4/5. Functionally, reversibly transfers an adenylyl group from ATP to 4'-phosphopantetheine, yielding dephospho-CoA (dPCoA) and pyrophosphate. In Staphylococcus aureus (strain Mu3 / ATCC 700698), this protein is Phosphopantetheine adenylyltransferase.